We begin with the raw amino-acid sequence, 211 residues long: Nucleoside triphosphate pyrophosphatase (211 aa).

The Proton acceptor role is filled by D75.

This sequence belongs to the Maf family. The cofactor is a divalent metal cation.

It localises to the cytoplasm. The enzyme catalyses a ribonucleoside 5'-triphosphate + H2O = a ribonucleoside 5'-phosphate + diphosphate + H(+). It catalyses the reaction a 2'-deoxyribonucleoside 5'-triphosphate + H2O = a 2'-deoxyribonucleoside 5'-phosphate + diphosphate + H(+). Nucleoside triphosphate pyrophosphatase. May have a dual role in cell division arrest and in preventing the incorporation of modified nucleotides into cellular nucleic acids. This chain is Nucleoside triphosphate pyrophosphatase, found in Prochlorococcus marinus (strain NATL1A).